A 124-amino-acid chain; its full sequence is Small ribosomal subunit protein uS12 (124 aa).

The residue at position 89 (Asp89) is a 3-methylthioaspartic acid.

Belongs to the universal ribosomal protein uS12 family. Part of the 30S ribosomal subunit. Contacts proteins S8 and S17. May interact with IF1 in the 30S initiation complex.

In terms of biological role, with S4 and S5 plays an important role in translational accuracy. Functionally, interacts with and stabilizes bases of the 16S rRNA that are involved in tRNA selection in the A site and with the mRNA backbone. Located at the interface of the 30S and 50S subunits, it traverses the body of the 30S subunit contacting proteins on the other side and probably holding the rRNA structure together. The combined cluster of proteins S8, S12 and S17 appears to hold together the shoulder and platform of the 30S subunit. The protein is Small ribosomal subunit protein uS12 of Blochmanniella floridana.